The chain runs to 34 residues: Photosystem I reaction center subunit XII (34 aa).

A helical membrane pass occupies residues 4–24 (VLSAPEVFIALVVAAHAAVLA).

It belongs to the PsaM family.

It is found in the cellular thylakoid membrane. This is Photosystem I reaction center subunit XII from Synechococcus sp. (strain CC9605).